A 131-amino-acid chain; its full sequence is Phosphoribosyl-AMP cyclohydrolase (131 aa).

Aspartate 82 serves as a coordination point for Mg(2+). Cysteine 83 contacts Zn(2+). Residues aspartate 84 and aspartate 86 each coordinate Mg(2+). Zn(2+) contacts are provided by cysteine 99 and cysteine 106.

Belongs to the PRA-CH family. In terms of assembly, homodimer. Requires Mg(2+) as cofactor. It depends on Zn(2+) as a cofactor.

It localises to the cytoplasm. It carries out the reaction 1-(5-phospho-beta-D-ribosyl)-5'-AMP + H2O = 1-(5-phospho-beta-D-ribosyl)-5-[(5-phospho-beta-D-ribosylamino)methylideneamino]imidazole-4-carboxamide. It functions in the pathway amino-acid biosynthesis; L-histidine biosynthesis; L-histidine from 5-phospho-alpha-D-ribose 1-diphosphate: step 3/9. Functionally, catalyzes the hydrolysis of the adenine ring of phosphoribosyl-AMP. This Methanospirillum hungatei JF-1 (strain ATCC 27890 / DSM 864 / NBRC 100397 / JF-1) protein is Phosphoribosyl-AMP cyclohydrolase.